Reading from the N-terminus, the 351-residue chain is 7,8-didemethyl-8-hydroxy-5-deazariboflavin synthase (351 aa).

A Radical SAM core domain is found at 35 to 275 (ITYSKNAFIP…EDISIQVPPN (241 aa)). Residues cysteine 49, cysteine 53, and cysteine 56 each coordinate [4Fe-4S] cluster.

Belongs to the radical SAM superfamily. CofG family. As to quaternary structure, consists of two subunits, CofG and CofH. Requires [4Fe-4S] cluster as cofactor.

The enzyme catalyses 5-amino-5-(4-hydroxybenzyl)-6-(D-ribitylimino)-5,6-dihydrouracil + S-adenosyl-L-methionine = 7,8-didemethyl-8-hydroxy-5-deazariboflavin + 5'-deoxyadenosine + L-methionine + NH4(+) + H(+). It participates in cofactor biosynthesis; coenzyme F0 biosynthesis. In terms of biological role, catalyzes the radical-mediated synthesis of 7,8-didemethyl-8-hydroxy-5-deazariboflavin from 5-amino-5-(4-hydroxybenzyl)-6-(D-ribitylimino)-5,6-dihydrouracil. This chain is 7,8-didemethyl-8-hydroxy-5-deazariboflavin synthase, found in Methanococcus vannielii (strain ATCC 35089 / DSM 1224 / JCM 13029 / OCM 148 / SB).